We begin with the raw amino-acid sequence, 520 residues long: Calcium and calcium/calmodulin-dependent serine/threonine-protein kinase (520 aa).

Positions 13-302 (YEVVDVLGKG…ANDLLKHPWV (290 aa)) constitute a Protein kinase domain. Residues 19–27 (LGKGGFSVV) and lysine 44 each bind ATP. Aspartate 167 (proton acceptor) is an active-site residue. The chain crosses the membrane as a helical span at residues 227 to 243 (MWSLGVILYILLSGCPP). Threonine 267 is modified (phosphothreonine; by autocatalysis). A calmodulin-binding region spans residues 325–338 (ARRKLRAAAIASVL). The stretch at 346–368 (TKKLKNLLGSHDMKSEELENLRA) forms a coiled coil. 4 consecutive EF-hand domains span residues 361 to 395 (EELENLRAHFKRICANGDNATLPEFEEVLKAMKMN), 396 to 431 (SLIPLAPRVFDLFDNNRDGTIDMREILCGLSNLRNS), 432 to 467 (QGDDALQLCFQMYDADRSGCISKEELASMLRALPED), and 474 to 509 (TEPGKLDEIFDQMDANSDGVVTFDEFKAAMQRDSSL). Ca(2+) contacts are provided by aspartate 409, asparagine 411, aspartate 413, threonine 415, glutamate 420, aspartate 445, aspartate 447, serine 449, cysteine 451, glutamate 456, aspartate 487, asparagine 489, aspartate 491, and glutamate 498.

The protein belongs to the protein kinase superfamily. CAMK Ser/Thr protein kinase family. CaMK subfamily. Autophosphorylation stimulated by calcium and inhibited by calcium/calmodulin. Occurs probably by an intermolecular mechanism.

It localises to the membrane. The catalysed reaction is L-seryl-[protein] + ATP = O-phospho-L-seryl-[protein] + ADP + H(+). It catalyses the reaction L-threonyl-[protein] + ATP = O-phospho-L-threonyl-[protein] + ADP + H(+). With respect to regulation, activated by calcium/calmodulin binding after calcium-induced autophosphorylation. Autophosphorylation is associated with a time-dependent loss of kinase activity sensitive to reaction pH and ATP concentration. In vitro inactivation leads to the formation of network-like structures. Protein kinase that may be involved in microsporogenesis. The protein is Calcium and calcium/calmodulin-dependent serine/threonine-protein kinase (CCAMK) of Lilium longiflorum (Trumpet lily).